Consider the following 437-residue polypeptide: MSLILKFMLLILLVSSHHVRSGSIVKFLPGFKGPLPFELETGYIGIGEEENVQFFYYFIKSDKNPQEDPLIIWLNGGPGCSCLSGLFFENGPLALKNKVYNGSVPSLVSTTYSWTKTANIIFLDQPVGSGFSYSKTPIERTSDTSEVKKIHEFLQKWLIKHPQFLSNPFYVVGDSYSGMIVPALVHEISKGNYICCNPPINLQGYVLGNPITHIEFEQNFRIPYAHGMSLISDELYESLKRICKGNYFSVDPSNKKCLKLVEEYHKCTDNINSHHTLIANCDDSNTQHISPDCYYYPYHLVECWANNESVREALHVDKGSIGEWIRDHRGIPYKSDIRSSIPYHMNNSINGYRSLIFSGDHDITMPFQATQAWIKSLNYSIIDDWRPWMIKGQIAGYTRTYSNKMTFATVKGGGHTAEYLPEESSIMFQRWISGQPL.

The first 21 residues, Met-1–Ser-21, serve as a signal peptide directing secretion. An N-linked (GlcNAc...) asparagine glycan is attached at Asn-101. Ser-175 is an active-site residue. Cystine bridges form between Cys-243–Cys-257 and Cys-281–Cys-293. 2 N-linked (GlcNAc...) asparagine glycosylation sites follow: Asn-307 and Asn-346. Asp-362 is a catalytic residue. Asn-378 carries an N-linked (GlcNAc...) asparagine glycan. Residue His-415 is part of the active site.

It belongs to the peptidase S10 family. Expressed in seedlings, leaves, flowers and siliques.

Its subcellular location is the secreted. It carries out the reaction 2 1-O-(trans-sinapoyl)-beta-D-glucose = 1,2-di-O-sinapoyl beta-D-glucose + D-glucose. Its function is as follows. Catalyzes the formation of 1,2-bis-O-sinapoyl beta-D-glucoside and an unidentified compound 1. This chain is Serine carboxypeptidase-like 9 (SCPL9), found in Arabidopsis thaliana (Mouse-ear cress).